Here is a 387-residue protein sequence, read N- to C-terminus: uncharacterized protein (387 aa).

It belongs to the geranylgeranyl reductase family. ChlP subfamily.

This is an uncharacterized protein from Methanosarcina barkeri (strain Fusaro / DSM 804).